Here is a 273-residue protein sequence, read N- to C-terminus: SPRY domain-containing SOCS box protein 1 (273 aa).

Position 31 is a phosphotyrosine; by MET (Tyr-31). The B30.2/SPRY domain occupies 33–231 (KPTRLDLLLD…IRMRYLNGLD (199 aa)). Positions 232 to 273 (PEPLPLMDLCRRSVRLALGRERLGEIHTLPLPASLKAYLLYQ) constitute an SOCS box domain.

It belongs to the SPSB family. As to quaternary structure, component of the probable ECS(SPSB1) E3 ubiquitin-protein ligase complex which contains CUL5, RNF7/RBX2, Elongin BC complex and SPSB1. Interacts with CUL5, RNF7, ELOB and ELOC. Directly interacts with MET tyrosine kinase domain in the presence and in the absence of HGF, however HGF treatment has a positive effect on this interaction. When phosphorylated, interacts with RASA1 without affecting its stability. Interacts (via B30.2/SPRY domain) with PAWR; this interaction is direct and occurs in association with the Elongin BC complex. Interacts with NOS2. Interacts with EPHB2.

Its subcellular location is the cytoplasm. The protein resides in the cytosol. It participates in protein modification; protein ubiquitination. In terms of biological role, substrate recognition component of a SCF-like ECS (Elongin BC-CUL2/5-SOCS-box protein) E3 ubiquitin-protein ligase complex which mediates the ubiquitination and subsequent proteasomal degradation of target proteins. Negatively regulates nitric oxide (NO) production and limits cellular toxicity in activated macrophages by mediating the ubiquitination and proteasomal degradation of NOS2. Acts as a bridge which links NOS2 with the ECS E3 ubiquitin ligase complex components ELOC and CUL5. In Homo sapiens (Human), this protein is SPRY domain-containing SOCS box protein 1 (SPSB1).